The sequence spans 91 residues: Pyruvate kinase (91 aa).

Arg48 is a binding site for substrate. K(+) contacts are provided by Asn50, Ser52, Asp82, and Thr83. 50–53 contacts ATP; it reads NFSH. Arg89 is a binding site for ATP.

The protein belongs to the pyruvate kinase family. In terms of assembly, homotetramer. Mg(2+) serves as cofactor. K(+) is required as a cofactor.

It catalyses the reaction pyruvate + ATP = phosphoenolpyruvate + ADP + H(+). It functions in the pathway carbohydrate degradation; glycolysis; pyruvate from D-glyceraldehyde 3-phosphate: step 5/5. The polypeptide is Pyruvate kinase (Leishmania braziliensis).